The following is a 58-amino-acid chain: Large ribosomal subunit protein uL30 (58 aa).

This sequence belongs to the universal ribosomal protein uL30 family. As to quaternary structure, part of the 50S ribosomal subunit.

The sequence is that of Large ribosomal subunit protein uL30 from Bacteroides thetaiotaomicron (strain ATCC 29148 / DSM 2079 / JCM 5827 / CCUG 10774 / NCTC 10582 / VPI-5482 / E50).